A 116-amino-acid polypeptide reads, in one-letter code: Secreted RxLR effector protein 9 (116 aa).

A signal peptide spans 1–17 (MRLIYIFMVSIVTTLHA). The RxLR-dEER motif lies at 49-64 (RILRGTDGNVNREQER).

Belongs to the RxLR effector family.

It is found in the secreted. The protein localises to the host cytoplasm. It localises to the host nucleus. Its function is as follows. Effector that acts as a broad suppressor of cell death to interrupt plant immunity. Inhibits cell death induced by cell death-inducing proteins, including the PAMP elicitor INF1 from P.infestans. The protein is Secreted RxLR effector protein 9 of Plasmopara viticola (Downy mildew of grapevine).